Consider the following 450-residue polypeptide: Glucose-6-phosphate isomerase (450 aa).

Catalysis depends on E290, which acts as the Proton donor. Residues H311 and K425 contribute to the active site.

It belongs to the GPI family.

The protein resides in the cytoplasm. It carries out the reaction alpha-D-glucose 6-phosphate = beta-D-fructose 6-phosphate. Its pathway is carbohydrate biosynthesis; gluconeogenesis. It participates in carbohydrate degradation; glycolysis; D-glyceraldehyde 3-phosphate and glycerone phosphate from D-glucose: step 2/4. Catalyzes the reversible isomerization of glucose-6-phosphate to fructose-6-phosphate. The polypeptide is Glucose-6-phosphate isomerase (Lactiplantibacillus plantarum (strain ATCC BAA-793 / NCIMB 8826 / WCFS1) (Lactobacillus plantarum)).